A 135-amino-acid polypeptide reads, in one-letter code: NAD(P)H-quinone oxidoreductase subunit 3 (135 aa).

The next 3 helical transmembrane spans lie at 15-35 (IVFF…SSLV), 79-99 (MFAL…PWAV), and 104-124 (LGLL…VALV).

It belongs to the complex I subunit 3 family. NDH-1 can be composed of about 15 different subunits; different subcomplexes with different compositions have been identified which probably have different functions.

The protein localises to the cellular thylakoid membrane. The catalysed reaction is a plastoquinone + NADH + (n+1) H(+)(in) = a plastoquinol + NAD(+) + n H(+)(out). It catalyses the reaction a plastoquinone + NADPH + (n+1) H(+)(in) = a plastoquinol + NADP(+) + n H(+)(out). Its function is as follows. NDH-1 shuttles electrons from an unknown electron donor, via FMN and iron-sulfur (Fe-S) centers, to quinones in the respiratory and/or the photosynthetic chain. The immediate electron acceptor for the enzyme in this species is believed to be plastoquinone. Couples the redox reaction to proton translocation, and thus conserves the redox energy in a proton gradient. Cyanobacterial NDH-1 also plays a role in inorganic carbon-concentration. This is NAD(P)H-quinone oxidoreductase subunit 3 from Trichodesmium erythraeum (strain IMS101).